We begin with the raw amino-acid sequence, 130 residues long: Small ribosomal subunit protein uS9 (130 aa).

Belongs to the universal ribosomal protein uS9 family.

This is Small ribosomal subunit protein uS9 from Nitrosospira multiformis (strain ATCC 25196 / NCIMB 11849 / C 71).